Consider the following 145-residue polypeptide: D-aminoacyl-tRNA deacylase (145 aa).

A Gly-cisPro motif, important for rejection of L-amino acids motif is present at residues 137-138 (GP).

This sequence belongs to the DTD family. In terms of assembly, homodimer.

It localises to the cytoplasm. The catalysed reaction is glycyl-tRNA(Ala) + H2O = tRNA(Ala) + glycine + H(+). It catalyses the reaction a D-aminoacyl-tRNA + H2O = a tRNA + a D-alpha-amino acid + H(+). An aminoacyl-tRNA editing enzyme that deacylates mischarged D-aminoacyl-tRNAs. Also deacylates mischarged glycyl-tRNA(Ala), protecting cells against glycine mischarging by AlaRS. Acts via tRNA-based rather than protein-based catalysis; rejects L-amino acids rather than detecting D-amino acids in the active site. By recycling D-aminoacyl-tRNA to D-amino acids and free tRNA molecules, this enzyme counteracts the toxicity associated with the formation of D-aminoacyl-tRNA entities in vivo and helps enforce protein L-homochirality. The sequence is that of D-aminoacyl-tRNA deacylase from Shewanella amazonensis (strain ATCC BAA-1098 / SB2B).